The following is a 374-amino-acid chain: Flap endonuclease 1 (374 aa).

Residues 1-105 (MGVKGLNQLI…GELEKRMIRK (105 aa)) are N-domain. D34 is a binding site for Mg(2+). DNA contacts are provided by R47 and R71. Mg(2+) contacts are provided by D87, E159, E161, D180, and D182. Positions 123-254 (EMVRYEKRSV…VTAFKLIKEH (132 aa)) are I-domain. E159 contributes to the DNA binding site. DNA is bound by residues G232 and D234. Mg(2+) is bound at residue D234. Residues 341–349 (VQGRLDGFF) form an interaction with PCNA region. Basic and acidic residues predominate over residues 354–365 (TEKRKPEQDKKT). A disordered region spans residues 354 to 374 (TEKRKPEQDKKTKGSKKAKKK).

It belongs to the XPG/RAD2 endonuclease family. FEN1 subfamily. Interacts with PCNA. Three molecules of FEN1 bind to one PCNA trimer with each molecule binding to one PCNA monomer. PCNA stimulates the nuclease activity without altering cleavage specificity. Mg(2+) serves as cofactor. Phosphorylated. Phosphorylation upon DNA damage induces relocalization to the nuclear plasma.

Its subcellular location is the nucleus. The protein localises to the nucleolus. It localises to the nucleoplasm. The protein resides in the mitochondrion. Functionally, structure-specific nuclease with 5'-flap endonuclease and 5'-3' exonuclease activities involved in DNA replication and repair. During DNA replication, cleaves the 5'-overhanging flap structure that is generated by displacement synthesis when DNA polymerase encounters the 5'-end of a downstream Okazaki fragment. It enters the flap from the 5'-end and then tracks to cleave the flap base, leaving a nick for ligation. Also involved in the long patch base excision repair (LP-BER) pathway, by cleaving within the apurinic/apyrimidinic (AP) site-terminated flap. Acts as a genome stabilization factor that prevents flaps from equilibrating into structures that lead to duplications and deletions. Also possesses 5'-3' exonuclease activity on nicked or gapped double-stranded DNA, and exhibits RNase H activity. Also involved in replication and repair of rDNA and in repairing mitochondrial DNA. The protein is Flap endonuclease 1 of Meyerozyma guilliermondii (strain ATCC 6260 / CBS 566 / DSM 6381 / JCM 1539 / NBRC 10279 / NRRL Y-324) (Yeast).